Here is a 310-residue protein sequence, read N- to C-terminus: Phosphoribosylaminoimidazole-succinocarboxamide synthase (310 aa).

Belongs to the SAICAR synthetase family.

It catalyses the reaction 5-amino-1-(5-phospho-D-ribosyl)imidazole-4-carboxylate + L-aspartate + ATP = (2S)-2-[5-amino-1-(5-phospho-beta-D-ribosyl)imidazole-4-carboxamido]succinate + ADP + phosphate + 2 H(+). Its pathway is purine metabolism; IMP biosynthesis via de novo pathway; 5-amino-1-(5-phospho-D-ribosyl)imidazole-4-carboxamide from 5-amino-1-(5-phospho-D-ribosyl)imidazole-4-carboxylate: step 1/2. This chain is Phosphoribosylaminoimidazole-succinocarboxamide synthase, found in Stenotrophomonas maltophilia (strain K279a).